The chain runs to 248 residues: tRNA pseudouridine synthase A (248 aa).

Aspartate 52 (nucleophile) is an active-site residue. Tyrosine 111 is a substrate binding site.

The protein belongs to the tRNA pseudouridine synthase TruA family. In terms of assembly, homodimer.

The catalysed reaction is uridine(38/39/40) in tRNA = pseudouridine(38/39/40) in tRNA. Its function is as follows. Formation of pseudouridine at positions 38, 39 and 40 in the anticodon stem and loop of transfer RNAs. In Methylocella silvestris (strain DSM 15510 / CIP 108128 / LMG 27833 / NCIMB 13906 / BL2), this protein is tRNA pseudouridine synthase A.